We begin with the raw amino-acid sequence, 263 residues long: Chymotrypsinogen B2 (263 aa).

Residues 1–18 (MAFLWLLSCWALLGTTFG) form the signal peptide. 5 cysteine pairs are disulfide-bonded: cysteine 19–cysteine 140, cysteine 60–cysteine 76, cysteine 154–cysteine 219, cysteine 186–cysteine 200, and cysteine 209–cysteine 238. The Peptidase S1 domain occupies 34 to 261 (IVNGEDAVPG…LIPWVQKILA (228 aa)). Residues histidine 75 and aspartate 120 each act as charge relay system in the active site. The Charge relay system role is filled by serine 213.

The protein belongs to the peptidase S1 family.

Its subcellular location is the secreted. The protein localises to the extracellular space. The enzyme catalyses Preferential cleavage: Tyr-|-Xaa, Trp-|-Xaa, Phe-|-Xaa, Leu-|-Xaa.. This Homo sapiens (Human) protein is Chymotrypsinogen B2 (CTRB2).